Reading from the N-terminus, the 179-residue chain is Small ribosomal subunit protein uS5c (179 aa).

The S5 DRBM domain maps to phenylalanine 26 to valine 89.

The protein belongs to the universal ribosomal protein uS5 family. Part of the 30S ribosomal subunit. Contacts protein S4.

The protein resides in the plastid. It is found in the chloroplast. Its function is as follows. With S4 and S12 plays an important role in translational accuracy. The polypeptide is Small ribosomal subunit protein uS5c (rps5) (Thalassiosira pseudonana (Marine diatom)).